Consider the following 1049-residue polypeptide: ABC transporter ATM1 (1049 aa).

Residues 1–90 constitute a mitochondrion transit peptide; it reads MRSFYNKCFT…NIFKNKGRLY (90 aa). The next 6 membrane-spanning stretches (helical) occupy residues 357-377, 397-419, 481-501, 506-526, 591-611, and 619-639; these read IFCS…TPIL, IYST…VLSS, VMVF…YILT, YTVS…TTLI, FLNF…MYLT, and IFPF…AMPL. The 292-residue stretch at 360 to 651 folds into the ABC transmembrane type-1 domain; it reads SLFFLLCSKM…FGTIYRETKL (292 aa). In terms of domain architecture, ABC transporter spans 807–1043; it reads LKNHKIINNS…NHFYREYYDS (237 aa). Residue 843–850 coordinates ATP; that stretch reads GKSGSGKS.

It belongs to the ABC transporter superfamily. ABCB family. Heavy Metal importer (TC 3.A.1.210) subfamily. Homodimer. Interacts with ISCU. Interacts with IscA2. Interacts with NBP35. Interacts with mHCF101.

The protein localises to the mitochondrion membrane. With respect to regulation, ATPase activity is stimulated by reduced glutathione. In terms of biological role, transports glutathione-coordinated [4Fe-4S] iron-sulfur clusters in an ATP-dependent manner. Required for optimal parasite growth during erythrocytic stages. The protein is ABC transporter ATM1 of Plasmodium falciparum (isolate 3D7).